A 926-amino-acid polypeptide reads, in one-letter code: Bifunctional uridylyltransferase/uridylyl-removing enzyme (926 aa).

The interval 1 to 379 (MPVSFLSLAS…PKSRRSGASK (379 aa)) is uridylyltransferase. Residues 380–736 (QIDGFPVIQG…GHEMPAYDAT (357 aa)) are uridylyl-removing. In terms of domain architecture, HD spans 496–618 (VDEHAIRALD…VKSPERLRLL (123 aa)). ACT domains lie at 737 to 814 (MISL…IRSS) and 849 to 926 (VIEV…ISEK).

It belongs to the GlnD family. It depends on Mg(2+) as a cofactor.

It catalyses the reaction [protein-PII]-L-tyrosine + UTP = [protein-PII]-uridylyl-L-tyrosine + diphosphate. The enzyme catalyses [protein-PII]-uridylyl-L-tyrosine + H2O = [protein-PII]-L-tyrosine + UMP + H(+). Uridylyltransferase (UTase) activity is inhibited by glutamine, while glutamine activates uridylyl-removing (UR) activity. Functionally, modifies, by uridylylation and deuridylylation, the PII regulatory proteins (GlnB and homologs), in response to the nitrogen status of the cell that GlnD senses through the glutamine level. Under low glutamine levels, catalyzes the conversion of the PII proteins and UTP to PII-UMP and PPi, while under higher glutamine levels, GlnD hydrolyzes PII-UMP to PII and UMP (deuridylylation). Thus, controls uridylylation state and activity of the PII proteins, and plays an important role in the regulation of nitrogen assimilation and metabolism. The polypeptide is Bifunctional uridylyltransferase/uridylyl-removing enzyme (Zymomonas mobilis subsp. mobilis (strain ATCC 31821 / ZM4 / CP4)).